The chain runs to 314 residues: Malate dehydrogenase (314 aa).

NAD(+) contacts are provided by residues 11–16 (GSGNIG) and D35. The substrate site is built by R84 and R90. NAD(+) contacts are provided by residues N97 and 120–122 (ITN). Positions 122 and 153 each coordinate substrate. H177 acts as the Proton acceptor in catalysis.

It belongs to the LDH/MDH superfamily. MDH type 3 family.

It catalyses the reaction (S)-malate + NAD(+) = oxaloacetate + NADH + H(+). In terms of biological role, catalyzes the reversible oxidation of malate to oxaloacetate. The chain is Malate dehydrogenase from Rickettsia africae (strain ESF-5).